We begin with the raw amino-acid sequence, 343 residues long: Endoglucanase C (343 aa).

Glu140 serves as the catalytic Proton donor. Glu280 serves as the catalytic Nucleophile.

This sequence belongs to the glycosyl hydrolase 5 (cellulase A) family.

The catalysed reaction is Endohydrolysis of (1-&gt;4)-beta-D-glucosidic linkages in cellulose, lichenin and cereal beta-D-glucans.. The protein operates within glycan metabolism; cellulose degradation. This enzyme catalyzes the endohydrolysis of 1,4-beta-glucosidic linkages in cellulose, lichenin and cereal beta-D-glucans. The protein is Endoglucanase C (celC) of Acetivibrio thermocellus (Hungateiclostridium thermocellum).